We begin with the raw amino-acid sequence, 423 residues long: Kynureninase (423 aa).

Residues leucine 105, serine 106, 133-136, aspartate 218, histidine 221, and tyrosine 243 contribute to the pyridoxal 5'-phosphate site; that span reads FPSD. Position 244 is an N6-(pyridoxal phosphate)lysine (lysine 244). Pyridoxal 5'-phosphate is bound by residues tryptophan 273 and asparagine 301.

This sequence belongs to the kynureninase family. As to quaternary structure, homodimer. Requires pyridoxal 5'-phosphate as cofactor.

The catalysed reaction is L-kynurenine + H2O = anthranilate + L-alanine + H(+). It catalyses the reaction 3-hydroxy-L-kynurenine + H2O = 3-hydroxyanthranilate + L-alanine + H(+). Its pathway is amino-acid degradation; L-kynurenine degradation; L-alanine and anthranilate from L-kynurenine: step 1/1. The protein operates within cofactor biosynthesis; NAD(+) biosynthesis; quinolinate from L-kynurenine: step 2/3. Catalyzes the cleavage of L-kynurenine (L-Kyn) and L-3-hydroxykynurenine (L-3OHKyn) into anthranilic acid (AA) and 3-hydroxyanthranilic acid (3-OHAA), respectively. The sequence is that of Kynureninase from Xanthomonas oryzae pv. oryzae (strain KACC10331 / KXO85).